We begin with the raw amino-acid sequence, 275 residues long: 3-methyl-2-oxobutanoate hydroxymethyltransferase (275 aa).

Residues D49 and D88 each coordinate Mg(2+). 3-methyl-2-oxobutanoate contacts are provided by residues 49–50, D88, and K118; that span reads DS. Position 120 (E120) interacts with Mg(2+). E187 functions as the Proton acceptor in the catalytic mechanism.

Belongs to the PanB family. In terms of assembly, homodecamer; pentamer of dimers. It depends on Mg(2+) as a cofactor.

It is found in the cytoplasm. The catalysed reaction is 3-methyl-2-oxobutanoate + (6R)-5,10-methylene-5,6,7,8-tetrahydrofolate + H2O = 2-dehydropantoate + (6S)-5,6,7,8-tetrahydrofolate. It participates in cofactor biosynthesis; (R)-pantothenate biosynthesis; (R)-pantoate from 3-methyl-2-oxobutanoate: step 1/2. In terms of biological role, catalyzes the reversible reaction in which hydroxymethyl group from 5,10-methylenetetrahydrofolate is transferred onto alpha-ketoisovalerate to form ketopantoate. In Bartonella quintana (strain Toulouse) (Rochalimaea quintana), this protein is 3-methyl-2-oxobutanoate hydroxymethyltransferase.